The primary structure comprises 302 residues: Glycine--tRNA ligase alpha subunit (302 aa).

Belongs to the class-II aminoacyl-tRNA synthetase family. In terms of assembly, tetramer of two alpha and two beta subunits.

The protein localises to the cytoplasm. The enzyme catalyses tRNA(Gly) + glycine + ATP = glycyl-tRNA(Gly) + AMP + diphosphate. This chain is Glycine--tRNA ligase alpha subunit, found in Psychromonas ingrahamii (strain DSM 17664 / CCUG 51855 / 37).